Here is a 743-residue protein sequence, read N- to C-terminus: Cytosolic neutral trehalase (743 aa).

Residues D95, D97, N99, Q101, and D106 each contribute to the Ca(2+) site. Substrate-binding positions include R285, W292–D293, N329, R338–Q340, E405, R454, and G457. Catalysis depends on proton donor/acceptor residues D459 and E664.

It belongs to the glycosyl hydrolase 37 family. It depends on Ca(2+) as a cofactor.

It localises to the cytoplasm. It carries out the reaction alpha,alpha-trehalose + H2O = alpha-D-glucose + beta-D-glucose. The protein operates within carbohydrate degradation. Functionally, hydrolyzes intracellular trehalose to glucose. The protein is Cytosolic neutral trehalase of Beauveria bassiana (strain ARSEF 2860) (White muscardine disease fungus).